Consider the following 85-residue polypeptide: N.vectensis toxin 1 5 (85 aa).

The first 20 residues, Met1–Ala20, serve as a signal peptide directing secretion. Residues Arg21 to Ser36 constitute a propeptide that is removed on maturation. Disulfide bonds link Cys42-Cys82, Cys44-Cys72, and Cys65-Cys83.

It belongs to the sea anemone sodium channel inhibitory toxin family. Type II subfamily. Expressed in ectodermal glands and in clumps outside of the extodermal layer. Is not expressed in nematocytes. In adult female tissues, shows similar expression levels in mesenteries (gametes-producing tissue), tentacles, pharynx and physa.

It is found in the secreted. Functionally, binds to site 3 of voltage-gated sodium channels and inhibits the inactivation process. Is highly active on DmNav1/TipE (drosophila) and is only extremely weakly active on rat Nav1.4-beta-1/SCN4A-SCN1B, and on human Nav1.5-beta-1/SCN5A-beta-1. This reveals high specificity for arthropod over mammalian channels. In vivo, when released into the medium, this recombinant toxin induces impaired swimming, paralysis and death of the crustacean A.nauplii within several hours. Also causes paralysis of cherry shrimps immediately after injection at very low doses. Its effect on zebrafish (D.rerio) larvae is also rapid, since it induces tail twitching accompanied by impaired swimming after 20 minutes and complete paralysis within 45 minutes. It has also been observed to cause death of zebrafish larvae within 1 hour. In Nematostella vectensis (Starlet sea anemone), this protein is N.vectensis toxin 1 5.